The chain runs to 124 residues: S-adenosylmethionine decarboxylase proenzyme (124 aa).

Residue serine 63 is the Schiff-base intermediate with substrate; via pyruvic acid of the active site. At serine 63 the chain carries Pyruvic acid (Ser); by autocatalysis. Histidine 68 (proton acceptor; for processing activity) is an active-site residue. The Proton donor; for catalytic activity role is filled by cysteine 83.

Belongs to the prokaryotic AdoMetDC family. Type 1 subfamily. In terms of assembly, heterotetramer of two alpha and two beta chains arranged as a dimer of alpha/beta heterodimers. Requires pyruvate as cofactor. Is synthesized initially as an inactive proenzyme. Formation of the active enzyme involves a self-maturation process in which the active site pyruvoyl group is generated from an internal serine residue via an autocatalytic post-translational modification. Two non-identical subunits are generated from the proenzyme in this reaction, and the pyruvate is formed at the N-terminus of the alpha chain, which is derived from the carboxyl end of the proenzyme. The post-translation cleavage follows an unusual pathway, termed non-hydrolytic serinolysis, in which the side chain hydroxyl group of the serine supplies its oxygen atom to form the C-terminus of the beta chain, while the remainder of the serine residue undergoes an oxidative deamination to produce ammonia and the pyruvoyl group blocking the N-terminus of the alpha chain.

It carries out the reaction S-adenosyl-L-methionine + H(+) = S-adenosyl 3-(methylsulfanyl)propylamine + CO2. The protein operates within amine and polyamine biosynthesis; S-adenosylmethioninamine biosynthesis; S-adenosylmethioninamine from S-adenosyl-L-methionine: step 1/1. Catalyzes the decarboxylation of S-adenosylmethionine to S-adenosylmethioninamine (dcAdoMet), the propylamine donor required for the synthesis of the polyamines spermine and spermidine from the diamine putrescine. The chain is S-adenosylmethionine decarboxylase proenzyme from Caldanaerobacter subterraneus subsp. tengcongensis (strain DSM 15242 / JCM 11007 / NBRC 100824 / MB4) (Thermoanaerobacter tengcongensis).